The chain runs to 367 residues: Outer membrane porin C (367 aa).

An N-terminal signal peptide occupies residues methionine 1–alanine 21. Over alanine 22 to aspartate 33 the chain is Periplasmic. A beta stranded membrane pass occupies residues leucine 34–histidine 42. Residues tyrosine 43 to aspartate 53 lie on the Extracellular side of the membrane. Residues glutamine 54 to glycine 63 form a beta stranded membrane-spanning segment. The Periplasmic portion of the chain corresponds to glutamate 64–glycine 73. The chain crosses the membrane as a beta stranded span at residues tyrosine 74–asparagine 84. Topologically, residues serine 85 to asparagine 91 are extracellular. Residues serine 92 to leucine 101 traverse the membrane as a beta stranded segment. Residues lysine 102–valine 106 lie on the Periplasmic side of the membrane. The beta stranded transmembrane segment at glycine 107–tyrosine 115 threads the bilayer. Residues glycine 116 to glycine 133 are loop L3; may constrict the pore. The Extracellular segment spans residues glycine 116–phenylalanine 141. The chain crosses the membrane as a beta stranded span at residues methionine 142–asparagine 154. Residues threonine 155 to glycine 163 lie on the Periplasmic side of the membrane. The chain crosses the membrane as a beta stranded span at residues leucine 164–glutamine 171. At glycine 172 to glycine 200 the chain is on the extracellular side. Residues valine 201–tyrosine 207 form a beta stranded membrane-spanning segment. At aspartate 208–glycine 211 the chain is on the periplasmic side. A beta stranded transmembrane segment spans residues phenylalanine 212–serine 219. The Extracellular portion of the chain corresponds to serine 220–threonine 241. Residues tyrosine 242–tyrosine 248 form a beta stranded membrane-spanning segment. At aspartate 249–asparagine 252 the chain is on the periplasmic side. A beta stranded transmembrane segment spans residues isoleucine 253 to threonine 260. Topologically, residues glutamine 261–glycine 269 are extracellular. A beta stranded transmembrane segment spans residues serine 270–tyrosine 286. At glutamine 287–glycine 291 the chain is on the periplasmic side. Residues leucine 292 to leucine 299 form a beta stranded membrane-spanning segment. The Extracellular segment spans residues glutamine 300–tyrosine 318. Residues valine 319–tyrosine 326 traverse the membrane as a beta stranded segment. At phenylalanine 327–asparagine 330 the chain is on the periplasmic side. The chain crosses the membrane as a beta stranded span at residues methionine 331 to lysine 338. The Extracellular portion of the chain corresponds to isoleucine 339–isoleucine 358. Asparagine 340, leucine 342, and threonine 355 together coordinate Mg(2+). A beta stranded membrane pass occupies residues valine 359–glutamine 366. Phenylalanine 367 is a topological domain (periplasmic).

The protein belongs to the Gram-negative porin family. As to quaternary structure, homotrimer. Forms mixed heterotrimers with OmpF and with PhoE; other mixed heterotrimers are also probable.

Its subcellular location is the cell outer membrane. In terms of biological role, forms pores that allow passive diffusion of small molecules across the outer membrane. Functionally, (Microbial infection) Supports colicin E5 entry in the absence of its major receptor OmpF. Its function is as follows. (Microbial infection) A mixed OmpC-OmpF heterotrimer is the outer membrane receptor for toxin CdiA-EC536; polymorphisms in extracellular loops 4 and 5 of OmpC confer susceptibility to CdiA-EC536-mediated toxicity. This Escherichia coli (strain K12) protein is Outer membrane porin C (ompC).